A 330-amino-acid chain; its full sequence is Mucin-15 (330 aa).

Positions 1 to 23 (MLTSAKILLISILSSLLLFGSHG) are cleaved as a signal peptide. Residues 23–115 (GEEGQKTNTT…SPRSPSTHSF (93 aa)) form a disordered region. Residues 24 to 232 (EEGQKTNTTE…SDPQEENRNT (209 aa)) are Extracellular-facing. Residues asparagine 30, asparagine 44, asparagine 54, asparagine 71, asparagine 79, asparagine 89, asparagine 94, asparagine 122, asparagine 138, asparagine 147, asparagine 154, asparagine 162, asparagine 175, asparagine 214, and asparagine 221 are each glycosylated (N-linked (GlcNAc...) asparagine). Residues 42-56 (MENQSVPLESKANLT) show a composition bias toward polar residues. A compositionally biased stretch (polar residues) spans 86-115 (FYSNLSTDNSSRSPSLMPTLSPRSPSTHSF). The interval 164–185 (SITVSNLPSGPNTTSVTPMVTE) is disordered. A helical membrane pass occupies residues 233-253 (GVVFGAILGAILGASLLSLVG). Topologically, residues 254 to 330 (YLLCGKRKTD…DDIPPLRTSV (77 aa)) are cytoplasmic. Residues 279–330 (LRLDNAPEPYDMSFGNSSYYNPTANDSSTSAGGENAHDSIPMDDIPPLRTSV) are disordered. Residues 292-310 (FGNSSYYNPTANDSSTSAG) show a composition bias toward polar residues.

In terms of processing, highly glycosylated (N- and O-linked carbohydrates). Mainly expressed on apical surfaces of the mammary epithelial cells.

The protein localises to the cell membrane. Its subcellular location is the secreted. This chain is Mucin-15 (MUC15), found in Bos taurus (Bovine).